Here is a 254-residue protein sequence, read N- to C-terminus: Ribosomal RNA small subunit methyltransferase G (254 aa).

S-adenosyl-L-methionine is bound by residues G92, 143–144 (AE), and R156.

The protein belongs to the methyltransferase superfamily. RNA methyltransferase RsmG family.

The protein resides in the cytoplasm. Its function is as follows. Specifically methylates the N7 position of a guanine in 16S rRNA. In Leptospira interrogans serogroup Icterohaemorrhagiae serovar copenhageni (strain Fiocruz L1-130), this protein is Ribosomal RNA small subunit methyltransferase G.